A 376-amino-acid chain; its full sequence is DNA replication and repair protein RecF (376 aa).

An ATP-binding site is contributed by 35–42 (GDNGSGKT).

The protein belongs to the RecF family.

It is found in the cytoplasm. The RecF protein is involved in DNA metabolism; it is required for DNA replication and normal SOS inducibility. RecF binds preferentially to single-stranded, linear DNA. It also seems to bind ATP. The protein is DNA replication and repair protein RecF of Agrobacterium fabrum (strain C58 / ATCC 33970) (Agrobacterium tumefaciens (strain C58)).